Here is a 133-residue protein sequence, read N- to C-terminus: UPF0102 protein AB57_1130 (133 aa).

This sequence belongs to the UPF0102 family.

This Acinetobacter baumannii (strain AB0057) protein is UPF0102 protein AB57_1130.